Consider the following 178-residue polypeptide: Protein SPEAR1 (178 aa).

Disordered regions lie at residues 1–48 and 139–178; these read MGST…QRGL and HFLNEDPSSTTRRSKSLGSGIQHSGSSENQEVDLELRLSL. Residues 14–28 are compositionally biased toward low complexity; it reads SSPPSSSPTSSSSSP. Residues 46–54 carry the SPL motif; it reads RGLGVAQLE. The segment covering 144-167 has biased composition (polar residues); it reads DPSSTTRRSKSLGSGIQHSGSSEN. Positions 170 to 176 match the EAR motif; the sequence is VDLELRL.

In terms of assembly, interacts with SPL and SPEAR2. In terms of tissue distribution, not detected in leaves.

Functionally, adapter-like transcriptional repressor recruiting TPL/TPR corepressors to inhibit TCP transcription factors. The polypeptide is Protein SPEAR1 (Arabidopsis thaliana (Mouse-ear cress)).